A 171-amino-acid polypeptide reads, in one-letter code: Tubulin polymerization-promoting protein family member 2 (171 aa).

The tract at residues 120-171 (LTDTSKYTGTHKERFDESGKGKGIAGREDVTDNSGYVSGYKGAGTYDKKGSN) is disordered. Residues 129 to 149 (THKERFDESGKGKGIAGREDV) are compositionally biased toward basic and acidic residues.

This sequence belongs to the TPPP family.

The protein resides in the cytoplasm. The protein localises to the cytosol. It localises to the cell projection. Its subcellular location is the cilium. It is found in the flagellum. In terms of biological role, probable regulator of microtubule dynamics required for sperm motility. In contrast to other members of the family, has no microtubule bundling activity. The polypeptide is Tubulin polymerization-promoting protein family member 2 (Bos taurus (Bovine)).